Here is a 185-residue protein sequence, read N- to C-terminus: Homeobox protein TGIF2LY (185 aa).

Disordered stretches follow at residues 1–58 (MEAA…GNLP) and 166–185 (RCQE…SSPE). A compositionally biased stretch (polar residues) spans 21–39 (AKTQSPAQDTSIMSRNNAD). Residues 48 to 111 (EHKKKRKGNL…INARRRILPD (64 aa)) constitute a DNA-binding region (homeobox; TALE-type).

Belongs to the TALE/TGIF homeobox family. As to expression, specifically expressed in adult testis.

The protein resides in the nucleus. May have a transcription role in testis. May act as a competitor/regulator of TGIF2LX. This Homo sapiens (Human) protein is Homeobox protein TGIF2LY (TGIF2LY).